Reading from the N-terminus, the 762-residue chain is 1-phosphatidylinositol 4,5-bisphosphate phosphodiesterase delta-4 (762 aa).

A PH domain is found at 16–124 (LLMQEGMPMR…WMRGLQLLVD (109 aa)). A substrate binding region spans residues 26–53 (KVRSKSWKKLRYFRLQNDGMTVWHARQA). 3 EF-hand domains span residues 134–169 (RLDQWLSDWFQRGDKNQDGKMSFQEVQRLLHLMNVE), 170–205 (MDQEYAFSLFQAADTSQSGTLEGEEFVQFYKALTKR), and 206–237 (AEVQELFESFSADGQKLTLLEFLDFLREEQKE). The Ca(2+) site is built by Asp-147, Asn-149, Asp-151, Lys-153, Glu-158, Asp-183, Ser-185, Ser-187, Thr-189, and Glu-194. A GBA motif is present at residues 213 to 243 (ESFSADGQKLTLLEFLDFLREEQKERDCTSE). A PI-PLC X-box domain is found at 290 to 435 (QDMTQPLNHY…LRRRILVKGK (146 aa)). His-305 is a catalytic residue. Ca(2+)-binding residues include Asn-306, Glu-335, and Asp-337. His-350 is a catalytic residue. Glu-384 lines the Ca(2+) pocket. Substrate is bound by residues Lys-433 and Lys-435. The span at 443–471 (LEYEEEEAEPELEESELALESQFETEPEP) shows a compositional bias: acidic residues. The interval 443-483 (LEYEEEEAEPELEESELALESQFETEPEPQEQNLQSKDKKK) is disordered. A Phosphoserine modification is found at Ser-457. Residues 493-609 (LSSLVIYLKS…GYVLKPDFLR (117 aa)) form the PI-PLC Y-box domain. Substrate-binding residues include Ser-522 and Arg-549. Positions 609 to 736 (RDIQSSFHPE…QGYRHIHLLS (128 aa)) constitute a C2 domain. Positions 650, 652, 676, 705, 706, and 707 each coordinate Ca(2+). The PDZ-binding signature appears at 731–734 (HIHL).

As to quaternary structure, interacts with GRIP1. Interacts (via GBA motif) with guanine nucleotide-binding protein G(i) alpha subunit GNAI3 (inactive GDP-bound form); low-affinity interaction. The cofactor is Ca(2+).

It localises to the membrane. The protein resides in the nucleus. The protein localises to the cytoplasm. Its subcellular location is the endoplasmic reticulum. The enzyme catalyses a 1,2-diacyl-sn-glycero-3-phospho-(1D-myo-inositol-4,5-bisphosphate) + H2O = 1D-myo-inositol 1,4,5-trisphosphate + a 1,2-diacyl-sn-glycerol + H(+). The catalysed reaction is a 1,2-diacyl-sn-glycero-3-phospho-(1D-myo-inositol) + H2O = 1D-myo-inositol 1-phosphate + a 1,2-diacyl-sn-glycerol + H(+). Hydrolyzes the phosphatidylinositol 4,5-bisphosphate (PIP2) to generate 2 second messenger molecules diacylglycerol (DAG) and inositol 1,4,5-trisphosphate (IP3). DAG mediates the activation of protein kinase C (PKC), while IP3 releases Ca(2+) from intracellular stores. Required for acrosome reaction in sperm during fertilization, probably by acting as an important enzyme for intracellular Ca(2+) mobilization in the zona pellucida-induced acrosome reaction. May play a role in cell growth. Modulates the liver regeneration in cooperation with nuclear PKC. Overexpression up-regulates the Erk signaling pathway and proliferation. This Pongo abelii (Sumatran orangutan) protein is 1-phosphatidylinositol 4,5-bisphosphate phosphodiesterase delta-4 (PLCD4).